The primary structure comprises 478 residues: Muscarinic acetylcholine receptor M4 (478 aa).

Over 1–30 the chain is Extracellular; that stretch reads MXNFTPVNGSSANQSVRLVTAAHNHLETVE. 2 N-linked (GlcNAc...) asparagine glycosylation sites follow: asparagine 8 and asparagine 13. Residues 31 to 53 form a helical membrane-spanning segment; sequence MVFIATVTGSLSLVTVVGNILVM. Topologically, residues 54 to 67 are cytoplasmic; it reads LSIKVNRQLQTVNN. A helical membrane pass occupies residues 68 to 88; that stretch reads YFLFSLGCADLIIGAFSMNLY. Residues 89–105 are Extracellular-facing; the sequence is TLYIIKGYWPLGAVVCD. A disulfide bridge connects residues cysteine 104 and cysteine 184. A helical transmembrane segment spans residues 106 to 127; sequence LWLALDYVVSNASVMNLLIISF. The Cytoplasmic portion of the chain corresponds to 128-147; it reads DRYFCVTKPLTYPARRTTKM. A helical membrane pass occupies residues 148–170; the sequence is AGLMIAAAWVLSFVLWAPAILFW. Residues 171–192 lie on the Extracellular side of the membrane; the sequence is QFVVGKRTVPDNQCFIQFLSNP. A helical membrane pass occupies residues 193-215; sequence AVTFGTAIAAFYLPVVIMTVLYI. Over 216–400 the chain is Cytoplasmic; sequence HISLASRSRV…AARERKVTRT (185 aa). The tract at residues 271-333 is disordered; that stretch reads LEEAPPPALP…APTLQPRTLN (63 aa). Residues 274-285 are compositionally biased toward pro residues; that stretch reads APPPALPPPPRP. Over residues 293 to 303 the composition is skewed to polar residues; it reads NESSSGSATQN. The span at 310-332 shows a compositional bias: low complexity; that stretch reads TELSTAEATTPALPAPTLQPRTL. Residues 401–421 traverse the membrane as a helical segment; that stretch reads IFAILLAFILTWTPYNVMVLV. Residues 422–435 lie on the Extracellular side of the membrane; sequence NTFCQSCIPERVWS. A helical transmembrane segment spans residues 436–455; the sequence is IGYWLCYVNSTINPACYALC. The Cytoplasmic portion of the chain corresponds to 456–478; the sequence is NATFKKTFRHLLLCQYRNIGTAR. Phosphothreonine is present on residues threonine 458, threonine 462, and threonine 476.

This sequence belongs to the G-protein coupled receptor 1 family. Muscarinic acetylcholine receptor subfamily. CHRM4 sub-subfamily.

The protein localises to the cell membrane. Its subcellular location is the postsynaptic cell membrane. The muscarinic acetylcholine receptor mediates various cellular responses, including inhibition of adenylate cyclase, breakdown of phosphoinositides and modulation of potassium channels through the action of G proteins. Primary transducing effect is inhibition of adenylate cyclase. The sequence is that of Muscarinic acetylcholine receptor M4 (Chrm4) from Rattus norvegicus (Rat).